A 207-amino-acid polypeptide reads, in one-letter code: Thiamine-phosphate synthase (207 aa).

Residues 38–42 (QYRNK) and Asn-70 each bind 4-amino-2-methyl-5-(diphosphooxymethyl)pyrimidine. Asp-71 and Asp-90 together coordinate Mg(2+). Position 109 (Ser-109) interacts with 4-amino-2-methyl-5-(diphosphooxymethyl)pyrimidine. Position 136 to 138 (136 to 138 (TAT)) interacts with 2-[(2R,5Z)-2-carboxy-4-methylthiazol-5(2H)-ylidene]ethyl phosphate. A 4-amino-2-methyl-5-(diphosphooxymethyl)pyrimidine-binding site is contributed by Lys-139. Residues Gly-165 and 185–186 (VS) contribute to the 2-[(2R,5Z)-2-carboxy-4-methylthiazol-5(2H)-ylidene]ethyl phosphate site.

Belongs to the thiamine-phosphate synthase family. The cofactor is Mg(2+).

The catalysed reaction is 2-[(2R,5Z)-2-carboxy-4-methylthiazol-5(2H)-ylidene]ethyl phosphate + 4-amino-2-methyl-5-(diphosphooxymethyl)pyrimidine + 2 H(+) = thiamine phosphate + CO2 + diphosphate. The enzyme catalyses 2-(2-carboxy-4-methylthiazol-5-yl)ethyl phosphate + 4-amino-2-methyl-5-(diphosphooxymethyl)pyrimidine + 2 H(+) = thiamine phosphate + CO2 + diphosphate. It catalyses the reaction 4-methyl-5-(2-phosphooxyethyl)-thiazole + 4-amino-2-methyl-5-(diphosphooxymethyl)pyrimidine + H(+) = thiamine phosphate + diphosphate. It functions in the pathway cofactor biosynthesis; thiamine diphosphate biosynthesis; thiamine phosphate from 4-amino-2-methyl-5-diphosphomethylpyrimidine and 4-methyl-5-(2-phosphoethyl)-thiazole: step 1/1. Functionally, condenses 4-methyl-5-(beta-hydroxyethyl)thiazole monophosphate (THZ-P) and 2-methyl-4-amino-5-hydroxymethyl pyrimidine pyrophosphate (HMP-PP) to form thiamine monophosphate (TMP). This Xanthomonas campestris pv. campestris (strain 8004) protein is Thiamine-phosphate synthase.